We begin with the raw amino-acid sequence, 156 residues long: RNA polymerase sigma factor SigS (156 aa).

Residues 29–44 carry the Polymerase core binding motif; sequence EYYQLLLIKMWQLSQI. Positions 126-145 form a DNA-binding region, H-T-H motif; that stretch reads QFEIAEIMSLSLSTIKLIKT.

It belongs to the sigma-70 factor family.

Functionally, sigma factors are initiation factors that promote the attachment of RNA polymerase to specific initiation sites and are then released. Sigma-S contributes to the protection against external stress, thus playing a role in cellular fitness and survival. The chain is RNA polymerase sigma factor SigS (sigS) from Staphylococcus aureus (strain bovine RF122 / ET3-1).